We begin with the raw amino-acid sequence, 979 residues long: Pheromone-regulated membrane protein 10 (979 aa).

Disordered stretches follow at residues 1-279 (MGKS…FFSK), 295-318 (LRNVNLHPEADPEKNSVQEAEVDG), 337-411 (YSSL…PQRV), 432-451 (FSTASSIGEEPAKPSKPLLD), and 491-528 (ATKHYPGRKNEEASGSNSELPSFKNTRPKKNKKHLPKF). The span at 15-26 (GGKDARSPETRS) shows a compositional bias: basic and acidic residues. Over residues 29–38 (SRSSTDNRSS) the composition is skewed to low complexity. The span at 54-68 (LDLEEGVDDDADFDW) shows a compositional bias: acidic residues. A compositionally biased stretch (polar residues) spans 77–86 (DAQSLDNPFN). Basic and acidic residues predominate over residues 105 to 115 (AIERDAVDTIR). Residues 122–135 (EEPDSASDGEDVGM) are compositionally biased toward acidic residues. 2 stretches are compositionally biased toward basic and acidic residues: residues 138–148 (EYQRKRERLVD) and 158–175 (SPRRESREGKNVRFHTET). The span at 192-213 (EAGTGTNENGEASSSGMKSSIN) shows a compositional bias: polar residues. Basic and acidic residues predominate over residues 253–263 (GAEKGMKSMKD). The span at 360 to 372 (SPSTPSSSPGPES) shows a compositional bias: low complexity. The segment covering 379–395 (DDYDFDQVDSDGEDSDL) has biased composition (acidic residues). The span at 503 to 515 (ASGSNSELPSFKN) shows a compositional bias: polar residues. A compositionally biased stretch (basic residues) spans 516-528 (TRPKKNKKHLPKF). 10 helical membrane passes run 658–678 (WVCVLLYGFCSAMVTPYAFGG), 680–700 (WVNLAVSFFIGTCVGALQFIV), 710–730 (VFEISASIVVSFVGRAFGSIG), 734–754 (ICFGAVTQGSLALILPGYIIL), 773–793 (FYAIIYSLFLSFGITLGAALF), 809–829 (PISPWYRFLFVPAFTIGISLI), 832–852 (AHWIQLPVMVTISCTGYVVTY), 864–884 (FTASLAAFVIGIMGNLYSRVW), 886–906 (GLAVSAMLPAIFVQVPSGVAS), and 946–966 (ITMIQVSIGITVGLFGSSLIV).

It belongs to the ThrE exporter (TC 2.A.79) family.

The protein resides in the membrane. This is Pheromone-regulated membrane protein 10 from Zygosaccharomyces rouxii (strain ATCC 2623 / CBS 732 / NBRC 1130 / NCYC 568 / NRRL Y-229).